Here is a 191-residue protein sequence, read N- to C-terminus: Protein GrpE (191 aa).

Over residues 1-15 (MGKEEKNNIEDKALD) the composition is skewed to basic and acidic residues. The disordered stretch occupies residues 1–35 (MGKEEKNNIEDKALDNEQEMDQESTSKAVEELSIE).

Belongs to the GrpE family. As to quaternary structure, homodimer.

The protein localises to the cytoplasm. Its function is as follows. Participates actively in the response to hyperosmotic and heat shock by preventing the aggregation of stress-denatured proteins, in association with DnaK and GrpE. It is the nucleotide exchange factor for DnaK and may function as a thermosensor. Unfolded proteins bind initially to DnaJ; upon interaction with the DnaJ-bound protein, DnaK hydrolyzes its bound ATP, resulting in the formation of a stable complex. GrpE releases ADP from DnaK; ATP binding to DnaK triggers the release of the substrate protein, thus completing the reaction cycle. Several rounds of ATP-dependent interactions between DnaJ, DnaK and GrpE are required for fully efficient folding. This chain is Protein GrpE, found in Francisella philomiragia subsp. philomiragia (strain ATCC 25017 / CCUG 19701 / FSC 153 / O#319-036).